The following is a 296-amino-acid chain: Elongation factor Ts (296 aa).

The tract at residues 82–85 (TDFV) is involved in Mg(2+) ion dislocation from EF-Tu.

Belongs to the EF-Ts family.

The protein resides in the cytoplasm. Associates with the EF-Tu.GDP complex and induces the exchange of GDP to GTP. It remains bound to the aminoacyl-tRNA.EF-Tu.GTP complex up to the GTP hydrolysis stage on the ribosome. The chain is Elongation factor Ts from Coxiella burnetii (strain CbuK_Q154) (Coxiella burnetii (strain Q154)).